Reading from the N-terminus, the 147-residue chain is TRAF-interacting protein with FHA domain-containing protein B (147 aa).

The 73-residue stretch at 36–108 (LLVGRGQNTH…LGTINRISFS (73 aa)) folds into the FHA domain.

As to quaternary structure, interacts with TIFA. As to expression, expressed at high levels in spleen and at moderate levels in lung, thymus, and small intestine.

Its function is as follows. Inhibits TIFA-mediated TRAF6 activation possibly by inducing a conformational change in TIFA. The chain is TRAF-interacting protein with FHA domain-containing protein B from Mus musculus (Mouse).